Consider the following 225-residue polypeptide: UPF0725 protein At5g63820 (225 aa).

It belongs to the UPF0725 (EMB2204) family.

The sequence is that of UPF0725 protein At5g63820 from Arabidopsis thaliana (Mouse-ear cress).